Reading from the N-terminus, the 297-residue chain is UDP-N-acetylenolpyruvoylglucosamine reductase (297 aa).

The FAD-binding PCMH-type domain occupies 22-195 (RAGGTARYYA…LAGRFRLQRG (174 aa)). Residue R169 is part of the active site. Residue S223 is the Proton donor of the active site. Residue E293 is part of the active site.

It belongs to the MurB family. FAD is required as a cofactor.

Its subcellular location is the cytoplasm. It carries out the reaction UDP-N-acetyl-alpha-D-muramate + NADP(+) = UDP-N-acetyl-3-O-(1-carboxyvinyl)-alpha-D-glucosamine + NADPH + H(+). Its pathway is cell wall biogenesis; peptidoglycan biosynthesis. Cell wall formation. The polypeptide is UDP-N-acetylenolpyruvoylglucosamine reductase (Chloroflexus aurantiacus (strain ATCC 29364 / DSM 637 / Y-400-fl)).